The sequence spans 219 residues: UPF0502 protein GSU0233 (219 aa).

This sequence belongs to the UPF0502 family.

This is UPF0502 protein GSU0233 from Geobacter sulfurreducens (strain ATCC 51573 / DSM 12127 / PCA).